Consider the following 372-residue polypeptide: Tetraacyldisaccharide 4'-kinase (372 aa).

60–67 (TVGGSGKT) serves as a coordination point for ATP.

It belongs to the LpxK family.

The catalysed reaction is a lipid A disaccharide + ATP = a lipid IVA + ADP + H(+). It participates in glycolipid biosynthesis; lipid IV(A) biosynthesis; lipid IV(A) from (3R)-3-hydroxytetradecanoyl-[acyl-carrier-protein] and UDP-N-acetyl-alpha-D-glucosamine: step 6/6. Functionally, transfers the gamma-phosphate of ATP to the 4'-position of a tetraacyldisaccharide 1-phosphate intermediate (termed DS-1-P) to form tetraacyldisaccharide 1,4'-bis-phosphate (lipid IVA). This Psychrobacter cryohalolentis (strain ATCC BAA-1226 / DSM 17306 / VKM B-2378 / K5) protein is Tetraacyldisaccharide 4'-kinase.